We begin with the raw amino-acid sequence, 241 residues long: Carboxy-S-adenosyl-L-methionine synthase 1 (241 aa).

Residues tyrosine 37, 61 to 63 (GCS), asparagine 131, and arginine 198 each bind S-adenosyl-L-methionine.

It belongs to the class I-like SAM-binding methyltransferase superfamily. Cx-SAM synthase family. Homodimer.

The enzyme catalyses prephenate + S-adenosyl-L-methionine = carboxy-S-adenosyl-L-methionine + 3-phenylpyruvate + H2O. Its function is as follows. Catalyzes the conversion of S-adenosyl-L-methionine (SAM) to carboxy-S-adenosyl-L-methionine (Cx-SAM). The protein is Carboxy-S-adenosyl-L-methionine synthase 1 of Yersinia pseudotuberculosis serotype IB (strain PB1/+).